The chain runs to 264 residues: MKQYLDFLRLVKNTGTNKTDRTGIGTTSLFGYQMRFDLSDGFPLITTKRVHLPSVVHELLWFLSGATNIKYLQENGVRIWNEWADKNGDLGPIYGVQWRNWQNVRGESIDQIMQVIEQIKNTPDSRRIIVSAWNVGELENMALPPCHAFFQFYVALGKLSCQLYQRSADVFLGVPFNIASYALLTHMMAQQCDLEVGDFIWSGGDCHIYSNHTKQVEIQLARTPKTLATLKINNKPDSIFDYNFEDFEFINYVFDAYIKATVAI.

R21 is a dUMP binding site. Residue H51 participates in (6R)-5,10-methylene-5,6,7,8-tetrahydrofolate binding. A dUMP-binding site is contributed by 126-127; the sequence is RR. C146 functions as the Nucleophile in the catalytic mechanism. Residues 166–169, N177, and 207–209 each bind dUMP; these read RSAD and HIY. Residue D169 coordinates (6R)-5,10-methylene-5,6,7,8-tetrahydrofolate. Residue A263 participates in (6R)-5,10-methylene-5,6,7,8-tetrahydrofolate binding.

Belongs to the thymidylate synthase family. Bacterial-type ThyA subfamily. As to quaternary structure, homodimer.

It is found in the cytoplasm. It catalyses the reaction dUMP + (6R)-5,10-methylene-5,6,7,8-tetrahydrofolate = 7,8-dihydrofolate + dTMP. It participates in pyrimidine metabolism; dTTP biosynthesis. In terms of biological role, catalyzes the reductive methylation of 2'-deoxyuridine-5'-monophosphate (dUMP) to 2'-deoxythymidine-5'-monophosphate (dTMP) while utilizing 5,10-methylenetetrahydrofolate (mTHF) as the methyl donor and reductant in the reaction, yielding dihydrofolate (DHF) as a by-product. This enzymatic reaction provides an intracellular de novo source of dTMP, an essential precursor for DNA biosynthesis. The sequence is that of Thymidylate synthase from Ruthia magnifica subsp. Calyptogena magnifica.